The primary structure comprises 145 residues: D-aminoacyl-tRNA deacylase (145 aa).

Positions 137–138 (GP) match the Gly-cisPro motif, important for rejection of L-amino acids motif.

The protein belongs to the DTD family. In terms of assembly, homodimer.

It is found in the cytoplasm. The catalysed reaction is glycyl-tRNA(Ala) + H2O = tRNA(Ala) + glycine + H(+). It catalyses the reaction a D-aminoacyl-tRNA + H2O = a tRNA + a D-alpha-amino acid + H(+). Its function is as follows. An aminoacyl-tRNA editing enzyme that deacylates mischarged D-aminoacyl-tRNAs. Also deacylates mischarged glycyl-tRNA(Ala), protecting cells against glycine mischarging by AlaRS. Acts via tRNA-based rather than protein-based catalysis; rejects L-amino acids rather than detecting D-amino acids in the active site. By recycling D-aminoacyl-tRNA to D-amino acids and free tRNA molecules, this enzyme counteracts the toxicity associated with the formation of D-aminoacyl-tRNA entities in vivo and helps enforce protein L-homochirality. This Cereibacter sphaeroides (strain ATCC 17029 / ATH 2.4.9) (Rhodobacter sphaeroides) protein is D-aminoacyl-tRNA deacylase.